Here is a 431-residue protein sequence, read N- to C-terminus: Transcription factor Sp7 (431 aa).

The tract at residues 30-56 (SSPLRDSTTLGKAGTKKPYSVGSDLSA) is disordered. An N6-propionyllysine mark is found at K41 and K45. A Glycyl lysine isopeptide (Lys-Gly) (interchain with G-Cter in ubiquitin) cross-link involves residue K58. 2 disordered regions span residues 71–115 (TNGL…VPKG) and 154–260 (TPTP…SGGY). The 9aaTAD motif lies at 156 to 164 (TPWWDMHPG). Over residues 166–178 (NWLGGGQGQGDGL) the composition is skewed to gly residues. Residue K230 forms a Glycyl lysine isopeptide (Lys-Gly) (interchain with G-Cter in ubiquitin) linkage. 3 C2H2-type zinc fingers span residues 294–318 (HSCH…LRWH), 324–348 (FVCN…VRTH), and 354–376 (FTCL…QRTH). N6-propionyllysine is present on residues K361 and K371. The interval 367-431 (DHLSKHQRTH…SPEQSNLLEI (65 aa)) is disordered. A compositionally biased stretch (polar residues) spans 403–412 (SQTPRPSASP).

Belongs to the Sp1 C2H2-type zinc-finger protein family. In terms of assembly, interacts with RIOX1; the interaction is direct and inhibits transcription activator activity. In terms of processing, ubiquitination at leads to proteasomal degradation. SP7 is a short-live protein with an endogenous half-life of approximately 12 hours. Propionylated. Depropionylation at Lys-371 by SIRT7 activates transcription factor activity and positively regulates bone formation by osteoblasts. In terms of tissue distribution, restricted to bone-derived cell.

It localises to the nucleus. Transcriptional activator essential for osteoblast differentiation. Binds to SP1 and EKLF consensus sequences and to other G/C-rich sequences. This Homo sapiens (Human) protein is Transcription factor Sp7 (SP7).